We begin with the raw amino-acid sequence, 609 residues long: MSQESSYGKWTISSSDDSEDEKPKPVKPSTSSGPQAGQGVSKEPTYTCSEARKAAHKRQISPVKFNNTDSVLPHKKQKMDSPEGLGWCLSSSDDEQQPDVTQQEQPKGVPPQEKKYAPSANVTTAQKVEDRSPPDSHRAQRADEEYETSGEGQDIWDMLDKENPFQFYLTRVSGIKAKYNSKALHIKDILSPLFGTLVSSAQFNYCFDVNWLIKQYPPEFRKKPILLVHGDKREAKADLHAQAKPYANISLCQAKLDIAFGTHHTKMMLLLYEEGLRVVIHTSNLIREDWHQKTQGIWLSPLYPRIYQGNHTSGESSTHFKADLTSYLMAYNAPPLQEWIDIIQEHDLSETNVYLIGSTPGRFQGSHKDNWGHFRLRKLLQAHAPSAPRGECWPVVGQFSSIGSLGPDESKWLCSEFKESLLAVREEGRTPGRSAVPLHLIYPSVENVRTSLEGYPAGGSLPYGIQTAEKQRWLHPYFHKWSAETSGRSNAMPHIKTYMRPSPDFSKLAWFLVTSANLSKAAWGALEKNGAQLMIRSYELGVLFLPSAFGLDTFKVKQKFFSSSSEPMASFPVPYDLPPELYGSKDRPWIWNIPYVKAPDTHGNMWVPS.

Residues 1–12 (MSQESSYGKWTI) are compositionally biased toward polar residues. The segment at 1–154 (MSQESSYGKW…EYETSGEGQD (154 aa)) is disordered. A phosphoserine mark is found at serine 61, serine 119, and serine 132. Over residues 127–143 (KVEDRSPPDSHRAQRAD) the composition is skewed to basic and acidic residues. Threonine 148 bears the Phosphothreonine mark. A Phosphoserine modification is found at serine 149. The active-site Nucleophile is the histidine 264. Position 266 (lysine 266) interacts with substrate. The segment at 401 to 404 (SIGS) is interaction with DNA. Histidine 494 functions as the Proton donor/acceptor in the catalytic mechanism. Lysine 496 is a substrate binding site.

The protein belongs to the tyrosyl-DNA phosphodiesterase family. In terms of assembly, monomer.

The protein localises to the nucleus. The protein resides in the cytoplasm. In terms of biological role, DNA repair enzyme that can remove a variety of covalent adducts from DNA through hydrolysis of a 3'-phosphodiester bond, giving rise to DNA with a free 3' phosphate. Catalyzes the hydrolysis of dead-end complexes between DNA and the topoisomerase I active site tyrosine residue. Hydrolyzes 3'-phosphoglycolates on protruding 3' ends on DNA double-strand breaks due to DNA damage by radiation and free radicals. Acts on blunt-ended double-strand DNA breaks and on single-stranded DNA. Has low 3'exonuclease activity and can remove a single nucleoside from the 3'end of DNA and RNA molecules with 3'hydroxyl groups. Has no exonuclease activity towards DNA or RNA with a 3'phosphate. The sequence is that of Tyrosyl-DNA phosphodiesterase 1 (Tdp1) from Rattus norvegicus (Rat).